Reading from the N-terminus, the 359-residue chain is 3-dehydroquinate synthase (359 aa).

NAD(+) is bound by residues 71–76, 105–109, 129–130, Lys142, and Lys151; these read DGEAYK, GVIGD, and TT. Positions 184, 247, and 264 each coordinate Zn(2+).

This sequence belongs to the sugar phosphate cyclases superfamily. Dehydroquinate synthase family. Co(2+) serves as cofactor. It depends on Zn(2+) as a cofactor. The cofactor is NAD(+).

The protein localises to the cytoplasm. It carries out the reaction 7-phospho-2-dehydro-3-deoxy-D-arabino-heptonate = 3-dehydroquinate + phosphate. Its pathway is metabolic intermediate biosynthesis; chorismate biosynthesis; chorismate from D-erythrose 4-phosphate and phosphoenolpyruvate: step 2/7. In terms of biological role, catalyzes the conversion of 3-deoxy-D-arabino-heptulosonate 7-phosphate (DAHP) to dehydroquinate (DHQ). The protein is 3-dehydroquinate synthase of Burkholderia mallei (strain NCTC 10247).